Here is a 288-residue protein sequence, read N- to C-terminus: ATP synthase gamma chain (288 aa).

Belongs to the ATPase gamma chain family. As to quaternary structure, F-type ATPases have 2 components, CF(1) - the catalytic core - and CF(0) - the membrane proton channel. CF(1) has five subunits: alpha(3), beta(3), gamma(1), delta(1), epsilon(1). CF(0) has three main subunits: a, b and c.

Its subcellular location is the cell inner membrane. Produces ATP from ADP in the presence of a proton gradient across the membrane. The gamma chain is believed to be important in regulating ATPase activity and the flow of protons through the CF(0) complex. This Rickettsia typhi (strain ATCC VR-144 / Wilmington) protein is ATP synthase gamma chain.